Consider the following 289-residue polypeptide: Diaminopimelate epimerase (289 aa).

Residues Asn13, Gln47, and Asn67 each coordinate substrate. Cys76 serves as the catalytic Proton donor. Substrate-binding positions include 77–78, Asn167, Asn200, and 218–219; these read GN and ER. The Proton acceptor role is filled by Cys227. 228-229 contacts substrate; sequence GT.

Belongs to the diaminopimelate epimerase family. Homodimer.

It localises to the cytoplasm. It carries out the reaction (2S,6S)-2,6-diaminopimelate = meso-2,6-diaminopimelate. It participates in amino-acid biosynthesis; L-lysine biosynthesis via DAP pathway; DL-2,6-diaminopimelate from LL-2,6-diaminopimelate: step 1/1. Catalyzes the stereoinversion of LL-2,6-diaminopimelate (L,L-DAP) to meso-diaminopimelate (meso-DAP), a precursor of L-lysine and an essential component of the bacterial peptidoglycan. This chain is Diaminopimelate epimerase, found in Burkholderia vietnamiensis (strain G4 / LMG 22486) (Burkholderia cepacia (strain R1808)).